A 213-amino-acid polypeptide reads, in one-letter code: Thymidylate kinase (213 aa).

10 to 17 (GLEGAGKT) serves as a coordination point for ATP.

The protein belongs to the thymidylate kinase family.

It catalyses the reaction dTMP + ATP = dTDP + ADP. Its function is as follows. Phosphorylation of dTMP to form dTDP in both de novo and salvage pathways of dTTP synthesis. This Escherichia coli O157:H7 (strain EC4115 / EHEC) protein is Thymidylate kinase.